We begin with the raw amino-acid sequence, 356 residues long: Syntaxin-7A (356 aa).

Over 1-333 the chain is Cytoplasmic; sequence MYNNNNNFGG…NQKSSRNKMC (333 aa). 2 stretches are compositionally biased toward low complexity: residues 32–74 and 207–224; these read NNNN…FDNN and NNNS…NNQQ. Disordered regions lie at residues 32–88 and 187–247; these read NNNN…NSDY and EKTT…RRQQ. The span at 233–244 shows a compositional bias: basic and acidic residues; it reads EDEHQSLMESSR. Residues 259-321 enclose the t-SNARE coiled-coil homology domain; the sequence is NSIIQERDEG…KEGVNHLREA (63 aa). Residues 334–354 traverse the membrane as a helical; Anchor for type IV membrane protein segment; that stretch reads WIVLILLIVCAVLGVILFFTL. At 355 to 356 the chain is on the vesicular side; sequence RK.

The protein belongs to the syntaxin family. In terms of assembly, component of the SNARE complex composed of syn7A, syn8A, vamp7A and vti1A. Interacts with nsfA, snpA and snpC.

It localises to the endosome membrane. Involved in the targeting and/or fusion of transport vesicles to their target membrane during transport of proteins from the early endosome to the lysosome. Required for fusion of late endosomes with lysosomes and homotypic lysosomal fusion. May be involved in protein trafficking from the plasma membrane to the early endosome (EE) as well as in homotypic fusion of endocytic organelles. The sequence is that of Syntaxin-7A from Dictyostelium discoideum (Social amoeba).